The primary structure comprises 89 residues: MDTRLINIGFGNIVAAGRVVAIVSPESAPIKRIISDARERGQLIDATYGRRTRAVIITDSGHVILSAIQPETVANRFLTAKPGLSEETE.

It belongs to the RemA family.

The sequence is that of Putative regulatory protein CYB_0055 from Synechococcus sp. (strain JA-2-3B'a(2-13)) (Cyanobacteria bacterium Yellowstone B-Prime).